The sequence spans 716 residues: Putative mannosyltransferase YkcB (716 aa).

The next 8 helical transmembrane spans lie at 8-28, 44-64, 87-107, 118-135, 137-157, 159-179, 180-200, and 206-226; these read LDIV…YNIW, MMQS…FITV, SVIL…YLLI, IASF…VART, NVDA…FKAI, KGKL…FNTK, MLQA…AANA, and IVSL…WPLI. A disordered region spans residues 260–363; the sequence is TGQNSGGGQG…GSGMFGTGTP (104 aa). Residues 278–289 are compositionally biased toward polar residues; it reads EMSSSDNTQAPP. The span at 290 to 307 shows a compositional bias: low complexity; sequence NQSSSNSSSSDGKSSNGN. The segment covering 318-347 has biased composition (gly residues); it reads PSGGQGGPPSGGDGGQGGPGGDGGKGGTGT. 6 helical membrane-spanning segments follow: residues 376–396, 409–429, 433–453, 462–482, 491–511, and 518–538; these read QISW…IAGA, TVFW…AEFF, YLIM…VALV, WKAW…LFIL, VGWS…LLLF, and FSYY…MYWA. The tract at residues 664–716 is disordered; that stretch reads VASEKWQSSSDQKTENTDSADTSSSKASGENGKMGGPGGMNQSATLYELHADE. Over residues 680–694 the composition is skewed to low complexity; it reads TDSADTSSSKASGEN.

This sequence belongs to the glycosyltransferase 39 family.

It is found in the cell membrane. The sequence is that of Putative mannosyltransferase YkcB (ykcB) from Bacillus subtilis (strain 168).